Reading from the N-terminus, the 184-residue chain is ATP synthase subunit b, chloroplastic (184 aa).

The chain crosses the membrane as a helical span at residues leucine 27 to leucine 49.

This sequence belongs to the ATPase B chain family. As to quaternary structure, F-type ATPases have 2 components, F(1) - the catalytic core - and F(0) - the membrane proton channel. F(1) has five subunits: alpha(3), beta(3), gamma(1), delta(1), epsilon(1). F(0) has four main subunits: a(1), b(1), b'(1) and c(10-14). The alpha and beta chains form an alternating ring which encloses part of the gamma chain. F(1) is attached to F(0) by a central stalk formed by the gamma and epsilon chains, while a peripheral stalk is formed by the delta, b and b' chains.

The protein localises to the plastid. Its subcellular location is the chloroplast thylakoid membrane. In terms of biological role, f(1)F(0) ATP synthase produces ATP from ADP in the presence of a proton or sodium gradient. F-type ATPases consist of two structural domains, F(1) containing the extramembraneous catalytic core and F(0) containing the membrane proton channel, linked together by a central stalk and a peripheral stalk. During catalysis, ATP synthesis in the catalytic domain of F(1) is coupled via a rotary mechanism of the central stalk subunits to proton translocation. Component of the F(0) channel, it forms part of the peripheral stalk, linking F(1) to F(0). The chain is ATP synthase subunit b, chloroplastic from Guizotia abyssinica (Niger).